The following is a 530-amino-acid chain: Glucose-6-phosphate isomerase (530 aa).

Glu-322 (proton donor) is an active-site residue. Active-site residues include His-351 and Lys-455.

It belongs to the GPI family.

The protein resides in the cytoplasm. The enzyme catalyses alpha-D-glucose 6-phosphate = beta-D-fructose 6-phosphate. It functions in the pathway carbohydrate biosynthesis; gluconeogenesis. Its pathway is carbohydrate degradation; glycolysis; D-glyceraldehyde 3-phosphate and glycerone phosphate from D-glucose: step 2/4. In terms of biological role, catalyzes the reversible isomerization of glucose-6-phosphate to fructose-6-phosphate. The protein is Glucose-6-phosphate isomerase of Geobacter sp. (strain M21).